A 586-amino-acid polypeptide reads, in one-letter code: Putative ABC transporter ATP-binding protein MG187 homolog (586 aa).

The ABC transporter domain occupies 13-464 (IEFKNIVVDF…PANEFVATFL (452 aa)). Residue 45–52 (GPSGCGKT) coordinates ATP.

The protein belongs to the ABC transporter superfamily.

This Mycoplasma pneumoniae (strain ATCC 29342 / M129 / Subtype 1) (Mycoplasmoides pneumoniae) protein is Putative ABC transporter ATP-binding protein MG187 homolog.